The sequence spans 444 residues: MLQCAPKKNERLRGSCDFCTQSKLRCNKNKPSCRRCTIQQQPCVYSVARRTGRPPKHPRTANDCQEANGQHGEQDPVTSTPGGSCQQQSNHLLDVEGDGANFTLADASTTAQGRETPASSALDNALLVGETFGFSSLLDDPLIQSDDFLSFSLCMPPGEEEGHMASPRALNGSTGPCSPTVLSSIDVPHLPARFGFLESSVESGLHGRTGPHLVEQPDKIVPSSFSEMEKIYDEGLTFSGLDSAINAVTNNGKGEPSASGTMAAHPHSKRQCFCSTSMSKLQMLISHPTLCQKNSRARFDMTLFLEEVVFNIHRDVLQCLVCQSKSLHSLASLCICTDWVIEALRDVAQDLSSGQDNLGGFRAGLCPPKDKFSICVGRFVLDDQLRESCTRSLVKYRLRKLVPIMDTMMKLNYRGAGGALSQAIRTMVEDVRHKIESALGMMEL.

A DNA-binding region (zn(2)-C6 fungal-type) is located at residues 16–43; the sequence is CDFCTQSKLRCNKNKPSCRRCTIQQQPC. The disordered stretch occupies residues 49–89; sequence RRTGRPPKHPRTANDCQEANGQHGEQDPVTSTPGGSCQQQS. Basic residues predominate over residues 50–59; it reads RTGRPPKHPR. The segment covering 76–89 has biased composition (polar residues); that stretch reads PVTSTPGGSCQQQS.

Its subcellular location is the nucleus. Its function is as follows. Transcription factor that regulates the expression of the gene clusters that mediate the biosynthesis of the host-selective toxins (HSTs) AK-toxins responsible for Japanese pear black spot disease by the Japanese pear pathotype. AK-toxins are esters of 9,10-epoxy 8-hydroxy 9-methyldecatrienoic acid (EDA). On cellular level, AK-toxins affect plasma membrane of susceptible cells and cause a sudden increase in loss of K(+) after a few minutes of toxin treatment. This chain is Transcription activator AKTR-3, found in Alternaria alternata (Alternaria rot fungus).